Consider the following 748-residue polypeptide: Proton-associated sugar transporter A (748 aa).

Helical transmembrane passes span 93–113 (ILFGIEFSYAMETAYVTPVLL), 123–143 (SLVWFISPILGFLLQPLLGAW), 155–175 (RPFILVLAIGALLGLSLLLNG), 191–211 (WGLLLTVCGVVLMDFSADSAD), 233–253 (IHALLAGLGGGFGYVVGGIHW), and 268–288 (VIYLFTAVTLSVTTVLTLVSI). The disordered stretch occupies residues 294 to 339 (RPPSEKRAAMKSPSLPLPPSPPVLPEEGPGDSLPSHTATNFSSPIS). A compositionally biased stretch (pro residues) spans 308–317 (LPLPPSPPVL). Residue Thr497 is modified to Phosphothreonine. Transmembrane regions (helical) follow at residues 533 to 553 (GWLSFEGMLLFYTDFMGEVVF), 573 to 593 (VTMGCWGMCIYAFSAAFYSAI), 600 to 620 (FLSVRTLYFIAYLAFGLGTGL), 627 to 647 (LYVVLSLCITYGILFSTLCTL), 685 to 705 (FLAQILVSLVLGPLTSAVGSA), and 708 to 728 (VMYFSSLVSFLGCLYSSLFVI).

It belongs to the glycoside-pentoside-hexuronide (GPH) cation symporter transporter (TC 2.A.2) family. In terms of tissue distribution, expressed in adult heart, brain, muscle and kidney, with very strong expression in brain. Also expressed in fetal brain, kidney and lung.

The protein localises to the membrane. The catalysed reaction is D-galactose(in) + H(+)(in) = D-galactose(out) + H(+)(out). The enzyme catalyses D-glucose(out) + H(+)(out) = D-glucose(in) + H(+)(in). Functionally, proton-associated glucose transporter in the brain. This is Proton-associated sugar transporter A from Homo sapiens (Human).